A 319-amino-acid chain; its full sequence is MRNPQLNEHGELQHLLTLDGLPRQIITAILDTAAPFTEVAEREVKKLPLLRGKSVFNLFFENSTRTRTTFEIAAKRLSADVVNLNIATSSSNKGESLLDTVDNLSAMQADMFVVRHAASGAPFLIAQHLLATGRDHIRVVNAGDGRHAHPTQGLLDMYTIRHYKGDFTNLVVAIVGDVLHSRVARSQIAALTTLGVPEVRVIGPKTLLPTEVERMGVRVFHDMREGLKDVDVVMMLRLQNERMNGALLPTPQEYYKIWGLTAEKLALAKPDAIVMHPGPMNRGVEIDSAVADGTQAVILPQVTFGIAVRMAVMSMLGSH.

Carbamoyl phosphate is bound by residues R65 and T66. K93 is a binding site for L-aspartate. Residues R115, H149, and Q152 each contribute to the carbamoyl phosphate site. Positions 182 and 237 each coordinate L-aspartate. Residues G278 and P279 each contribute to the carbamoyl phosphate site.

It belongs to the aspartate/ornithine carbamoyltransferase superfamily. ATCase family. Heterododecamer (2C3:3R2) of six catalytic PyrB chains organized as two trimers (C3), and six regulatory PyrI chains organized as three dimers (R2).

It catalyses the reaction carbamoyl phosphate + L-aspartate = N-carbamoyl-L-aspartate + phosphate + H(+). The protein operates within pyrimidine metabolism; UMP biosynthesis via de novo pathway; (S)-dihydroorotate from bicarbonate: step 2/3. Catalyzes the condensation of carbamoyl phosphate and aspartate to form carbamoyl aspartate and inorganic phosphate, the committed step in the de novo pyrimidine nucleotide biosynthesis pathway. This is Aspartate carbamoyltransferase catalytic subunit from Azoarcus sp. (strain BH72).